Reading from the N-terminus, the 427-residue chain is Trigger factor (427 aa).

The 86-residue stretch at 163–248 (GDTVVIDFVG…IHEVKAKEVP (86 aa)) folds into the PPIase FKBP-type domain.

The protein belongs to the FKBP-type PPIase family. Tig subfamily.

The protein localises to the cytoplasm. The enzyme catalyses [protein]-peptidylproline (omega=180) = [protein]-peptidylproline (omega=0). Its function is as follows. Involved in protein export. Acts as a chaperone by maintaining the newly synthesized protein in an open conformation. Functions as a peptidyl-prolyl cis-trans isomerase. In Streptococcus pneumoniae (strain JJA), this protein is Trigger factor.